Here is a 289-residue protein sequence, read N- to C-terminus: Acetyl-coenzyme A carboxylase carboxyl transferase subunit beta (289 aa).

Residues 30 to 289 (IWRECPRCHS…SNAWRANHDK (260 aa)) enclose the CoA carboxyltransferase N-terminal domain. 4 residues coordinate Zn(2+): cysteine 34, cysteine 37, cysteine 52, and cysteine 55. The segment at 34 to 55 (CPRCHSRFYYRRFGNFDVCPEC) adopts a C4-type zinc-finger fold.

This sequence belongs to the AccD/PCCB family. In terms of assembly, acetyl-CoA carboxylase is a heterohexamer composed of biotin carboxyl carrier protein (AccB), biotin carboxylase (AccC) and two subunits each of ACCase subunit alpha (AccA) and ACCase subunit beta (AccD). It depends on Zn(2+) as a cofactor.

The protein localises to the cytoplasm. It carries out the reaction N(6)-carboxybiotinyl-L-lysyl-[protein] + acetyl-CoA = N(6)-biotinyl-L-lysyl-[protein] + malonyl-CoA. It participates in lipid metabolism; malonyl-CoA biosynthesis; malonyl-CoA from acetyl-CoA: step 1/1. Its function is as follows. Component of the acetyl coenzyme A carboxylase (ACC) complex. Biotin carboxylase (BC) catalyzes the carboxylation of biotin on its carrier protein (BCCP) and then the CO(2) group is transferred by the transcarboxylase to acetyl-CoA to form malonyl-CoA. This is Acetyl-coenzyme A carboxylase carboxyl transferase subunit beta from Oenococcus oeni (strain ATCC BAA-331 / PSU-1).